Consider the following 154-residue polypeptide: MKLLSKIMIIALAASMLQACNSPGGMNKQGTGTLLGGAGGALLGSQFGKGKGQLVGVGVGALLGAVLGGQIGAGMDEQDRRLAELTSQRALETAPSGSNVEWRNPDNGNYGYVTPNKTYRNSNGQYCREYTQTVVIGGKQQKAYGNACRQPDGQ.

The first 19 residues, 1 to 19 (MKLLSKIMIIALAASMLQA), serve as a signal peptide directing secretion. The N-palmitoyl cysteine moiety is linked to residue Cys20. Cys20 carries the S-diacylglycerol cysteine lipid modification.

Belongs to the rickettsiale 17 kDa surface antigen family.

It is found in the cell outer membrane. The sequence is that of 17 kDa surface antigen (omp) from Rickettsia australis.